A 482-amino-acid chain; its full sequence is MDFYTTDINKNVVPLFSKGTVARTASKAQYPSWCNNALKLTNILLKSLRCKFQTNRCEDDRGFEVYCVILKSIALLMAAKESLILLQIPPSLPSGFPFRSPQLSFTYLSTRLSGSQHKSTHSHHINHQTHPIHSSSSNSNSNNRIPTKTDSSKQHTQHFSFANAGASNRDELLSIVRKIDKSNLKCCDCGSTATVEWVSINLLCILCIKCSGVHRSLGSHISKIRSLTLDNFTSLELMHLLQNNVSNSNVNAIYESNLRNFPVKKITANSDDSERSKFIIDKYQFKKFVIDSNQGREASLKSLIKAIHLDSVFMMQRAIAQSKYSLRELTASEKEQNDLNHSSIFQYSLKHYEIVDGTPIFFITEFLLCNGIHIDNLPKITTNWSPKVLEYWETKLEMYGTFQAVNTSRPRSGPHLNMHSNVDSASSYNKKHDLRVNIPERSASASKRWSLSSIPKSSQNLMSPTNLLTMHKSLKLAKKDKK.

The segment at 116 to 156 (QHKSTHSHHINHQTHPIHSSSSNSNSNNRIPTKTDSSKQHT) is disordered. A compositionally biased stretch (basic residues) spans 118–127 (KSTHSHHINH). Residues 134–143 (SSSSNSNSNN) are compositionally biased toward low complexity. The Arf-GAP domain occupies 170–297 (DELLSIVRKI…FVIDSNQGRE (128 aa)). A C4-type zinc finger spans residues 186–210 (CCDCGSTATVEWVSINLLCILCIKC).

Its subcellular location is the cytoplasm. In terms of biological role, GTPase-activating protein (GAP) for the ADP ribosylation factors ARF1 and ARF2. May be involved in the endocytic pathway. This is ADP-ribosylation factor GTPase-activating protein effector protein 1 (AGE1) from Saccharomyces cerevisiae (strain ATCC 204508 / S288c) (Baker's yeast).